A 312-amino-acid chain; its full sequence is tRNA uridine(34) hydroxylase (312 aa).

A Rhodanese domain is found at 124 to 218 (SDPEVLLIDT…YLEEVPQEQT (95 aa)). Cysteine 178 serves as the catalytic Cysteine persulfide intermediate. Basic and acidic residues-rich tracts occupy residues 279–294 (TRES…ELAR) and 302–312 (IGRDPRQLNEA). Residues 279-312 (TRESARERQKQIELARARNQPHPIGRDPRQLNEA) form a disordered region.

This sequence belongs to the TrhO family.

The catalysed reaction is uridine(34) in tRNA + AH2 + O2 = 5-hydroxyuridine(34) in tRNA + A + H2O. Catalyzes oxygen-dependent 5-hydroxyuridine (ho5U) modification at position 34 in tRNAs. This Ectopseudomonas mendocina (strain ymp) (Pseudomonas mendocina) protein is tRNA uridine(34) hydroxylase.